The primary structure comprises 163 residues: MNTKYNKEFLLYLAGFVDGDGSIIAQIKPNQSYKFKHQLSLTFQVTQKTQRRWFLDKLVDEIGVGYVRDRGSVSDYILSEIKPLHNFLTQLQPFLKLKQKQANLVLKIIEQLPSAKESPDKFLEVCTWVDQIAALNDSKTRKTTSETVRAVLDSLSEKKKSSP.

Gly19 and Asp20 together coordinate Mg(2+). Interaction with DNA stretches follow at residues 26-38 (QIKP…FKHQ), 44-47 (QVTQ), 68-70 (RDR), and 138-143 (SKTRKT).

Belongs to the LAGLIDADG endonuclease family. In terms of assembly, homodimer. It depends on Mg(2+) as a cofactor. The cofactor is Mn(2+). Co(2+) serves as cofactor. Ni(2+) is required as a cofactor. Requires Zn(2+) as cofactor.

The protein localises to the plastid. Its subcellular location is the chloroplast. Functionally, endonuclease involved in group I intron homing. Recognizes and cleaves a 19-24 bp palindromic DNA site. This is DNA endonuclease I-CreI from Chlamydomonas reinhardtii (Chlamydomonas smithii).